The chain runs to 483 residues: Keratin, type II cytoskeletal 8 (483 aa).

Residues 1–16 (MSIRVTQKSYKVSTSG) show a composition bias toward polar residues. The segment at 1 to 41 (MSIRVTQKSYKVSTSGPRAFSSRSYTSGPGSRISSSSFSRV) is disordered. The segment at 1 to 90 (MSIRVTQKSY…DPNIQAVRTQ (90 aa)) is head. Ser9 carries the phosphoserine; by PKC/PRKCE modification. Residue Lys11 forms a Glycyl lysine isopeptide (Lys-Gly) (interchain with G-Cter in SUMO2) linkage. A phosphoserine mark is found at Ser13, Ser15, Ser21, and Ser22. Arg23 is subject to Omega-N-methylarginine. Phosphoserine; by PKC/PRKCE is present on Ser24. Low complexity predominate over residues 24–41 (SYTSGPGSRISSSSFSRV). Thr26 is subject to Phosphothreonine. Phosphoserine is present on residues Ser27 and Ser31. Arg32 bears the Omega-N-methylarginine mark. Phosphoserine occurs at positions 34, 37, and 39. Residue Arg40 is modified to Omega-N-methylarginine. Phosphoserine is present on residues Ser43 and Ser44. Arg47 bears the Asymmetric dimethylarginine; alternate mark. Arg47 is subject to Omega-N-methylarginine; alternate. A Phosphoserine; by MAPK modification is found at Ser74. The tract at residues 91–126 (EKEQIKTLNNKFASFIDKVRFLEQQNKMLETKWSLL) is coil 1A. The 312-residue stretch at 91–402 (EKEQIKTLNN…KLLEGEESRL (312 aa)) folds into the IF rod domain. Lys101 is subject to N6-malonyllysine. Residues Lys122 and Lys130 each participate in a glycyl lysine isopeptide (Lys-Gly) (interchain with G-Cter in SUMO2) cross-link. A linker 1 region spans residues 127–143 (QQQKTARSNMDNMFESY). A coil 1B region spans residues 144–235 (INNLRRQLET…QLYEEEIREL (92 aa)). Lys197 is covalently cross-linked (Glycyl lysine isopeptide (Lys-Gly) (interchain with G-Cter in SUMO1); alternate). Lys197 participates in a covalent cross-link: Glycyl lysine isopeptide (Lys-Gly) (interchain with G-Cter in SUMO2); alternate. Position 207 is an N6-acetyllysine (Lys207). Tyr228 bears the Phosphotyrosine mark. Residues 236–259 (QSQISDTSVVLSMDNSRSLDMDSI) are linker 12. Phosphoserine occurs at positions 253 and 258. Positions 260–398 (IAEVKAQYED…ATYRKLLEGE (139 aa)) are coil 2. The segment at 261-382 (AEVKAQYEDI…EYQELMNVKL (122 aa)) is necessary for interaction with PNN. Lys264 is covalently cross-linked (Glycyl lysine isopeptide (Lys-Gly) (interchain with G-Cter in SUMO2)). Ser274 is subject to Phosphoserine. Residue Lys285 forms a Glycyl lysine isopeptide (Lys-Gly) (interchain with G-Cter in SUMO2) linkage. Position 291 is a phosphoserine (Ser291). Lys295 participates in a covalent cross-link: Glycyl lysine isopeptide (Lys-Gly) (interchain with G-Cter in SUMO2); alternate. Residue Lys295 is modified to N6-acetyllysine; alternate. Lys304 is covalently cross-linked (Glycyl lysine isopeptide (Lys-Gly) (interchain with G-Cter in SUMO2)). A Glycyl lysine isopeptide (Lys-Gly) (interchain with G-Cter in SUMO2); alternate cross-link involves residue Lys325. The residue at position 325 (Lys325) is an N6-acetyllysine; alternate. Phosphoserine is present on Ser330. Lys393 is covalently cross-linked (Glycyl lysine isopeptide (Lys-Gly) (interchain with G-Cter in SUMO2)). The tail stretch occupies residues 399-483 (ESRLESGMQN…VSESSDVLPK (85 aa)). Phosphoserine occurs at positions 400, 404, 410, 417, and 424. Phosphoserine; by CaMK2 and MAPK is present on Ser432. A Glycyl lysine isopeptide (Lys-Gly) (interchain with G-Cter in SUMO1); alternate cross-link involves residue Lys472. Lys472 participates in a covalent cross-link: Glycyl lysine isopeptide (Lys-Gly) (interchain with G-Cter in SUMO2); alternate. Phosphoserine is present on residues Ser475, Ser477, and Ser478.

The protein belongs to the intermediate filament family. In terms of assembly, heterotetramer of two type I and two type II keratins. Forms a heterodimer with KRT18. Associates with KRT20. Interacts with PLEC isoform 1C, when in a heterodimer with KRT18. Interacts with PNN. When associated with KRT19, interacts with DMD. Interacts with TCHP. Interacts with APEX1. Interacts with GPER1. Interacts with EPPK1. Interacts with PKP1 and PKP2. (Microbial infection) Interacts with hepatitis C virus/HCV core protein. In terms of processing, phosphorylation on serine residues is enhanced during EGF stimulation and mitosis. Ser-74 phosphorylation plays an important role in keratin filament reorganization. Post-translationally, O-glycosylated. O-GlcNAcylation at multiple sites increases solubility, and decreases stability by inducing proteasomal degradation. O-glycosylated (O-GlcNAcylated), in a cell cycle-dependent manner. As to expression, observed in muscle fibers accumulating in the costameres of myoplasm at the sarcolemma membrane in structures that contain dystrophin and spectrin. Expressed in gingival mucosa and hard palate of the oral cavity.

Its subcellular location is the cytoplasm. It is found in the nucleus. It localises to the nucleoplasm. The protein resides in the nucleus matrix. In terms of biological role, together with KRT19, helps to link the contractile apparatus to dystrophin at the costameres of striated muscle. The sequence is that of Keratin, type II cytoskeletal 8 (KRT8) from Homo sapiens (Human).